A 410-amino-acid chain; its full sequence is Transcription factor Dp-1 (410 aa).

Lys-3 carries the post-translational modification N6-acetyllysine. Ser-23 is modified (phosphoserine). A compositionally biased stretch (polar residues) spans 73 to 100 (SNTLVVGSPHTPSTHFASQNQPSDSSPW). A disordered region spans residues 73-116 (SNTLVVGSPHTPSTHFASQNQPSDSSPWSAGKRNRKGEKNGKGL). Basic residues predominate over residues 104 to 116 (KRNRKGEKNGKGL). Residues 105-127 (RNRKGEKNGKGLRHFSMKVCEKV) form an interaction with CEBPA region. The DNA-binding element occupies 113-195 (GKGLRHFSMK…KKEIKWIGLP (83 aa)). Positions 161–195 (DQKNIRRRVYDALNVLMAMNIISKEKKEIKWIGLP) match the DEF box motif. A dimerization region spans residues 204-277 (NLEVERQRRL…KKTVIDCSIS (74 aa)). The interval 211–327 (RRLERIKQKQ…DLKMARSLVP (117 aa)) is enhances binding of RB protein to E2F. Residues 214-246 (ERIKQKQSQLQELILQQIAFKNLVQRNRHAEQQ) are DCB1. Residues 259-315 (LPFIIVNTSKKTVIDCSISNDKFEYLFNFDNTFEIHDDIEVLKRMGMACGLESGSCS) form a DCB2 region. Residues 370 to 410 (GMLATSSNGSQYSGSRVETPVSYVGEDDEEDDDFNENDEDD) are disordered. Residues 373-385 (ATSSNGSQYSGSR) show a composition bias toward polar residues. A compositionally biased stretch (acidic residues) spans 394–410 (GEDDEEDDDFNENDEDD).

Belongs to the E2F/DP family. In terms of assembly, component of the E2F:DP transcription factor complex. Forms heterodimers with E2F family members. The complex can interact with hypophosphorylated retinoblastoma protein RB1 and related proteins (RBL1 and RBL2) that inhibit the E2F transactivation domain. This repression involves recruitment of histone deacetylase (HDAC). During the cell cycle, from mid-to-late G1 phase, RB family members become phosphorylated, detach from the DRTF1/E2F complex to render E2F transcriptionally active. Viral oncoproteins, notably E1A, T-antigen and HPV E7, are capable of sequestering RB protein, thus releasing the active complex. Part of the E2F6.com-1 complex in G0 phase is composed of E2F6, MGA, MAX, TFDP1, CBX3, BAT8, EUHMTASE1, RING1, RNF2, MBLR, L3MBTL2 YAF2. Component of the DREAM complex (also named LINC complex) at least composed of E2F4, E2F5, LIN9, LIN37, LIN52, LIN54, MYBL1, MYBL2, RBL1, RBL2, RBBP4, TFDP1 and TFDP2. The complex exists in quiescent cells where it represses cell cycle-dependent genes. It dissociates in S phase when LIN9, LIN37, LIN52 and LIN54 form a subcomplex that binds to MYBL2. The complex TFDP1:E2F1 interacts with CEBPA; the interaction prevents CEBPA binding to target gene promoters and represses its transcriptional activity. In terms of processing, phosphorylation by E2F1-bound cyclin A-CDK2, in the S phase, inhibits E2F-mediated DNA binding and transactivation. Ubiquitinated by the BCR(KBTBD5) complex, leading to its subsequent degradation. Highest levels in muscle. Also expressed in brain, placenta, liver and kidney. Lower levels in lung and pancreas. Not detected in heart.

Its subcellular location is the nucleus. It is found in the cytoplasm. Its function is as follows. Can stimulate E2F-dependent transcription. Binds DNA cooperatively with E2F family members through the E2 recognition site, 5'-TTTC[CG]CGC-3', found in the promoter region of a number of genes whose products are involved in cell cycle regulation or in DNA replication. The E2F1:DP complex appears to mediate both cell proliferation and apoptosis. Blocks adipocyte differentiation by repressing CEBPA binding to its target gene promoters. The polypeptide is Transcription factor Dp-1 (TFDP1) (Homo sapiens (Human)).